A 161-amino-acid chain; its full sequence is Large ribosomal subunit protein uL15 (161 aa).

Positions 1-44 (MKLSEIADNAGSRKKRMRVGRGIGSGKGKTAGRGGKGQTARSGV) are disordered. The segment covering 21–37 (RGIGSGKGKTAGRGGKG) has biased composition (gly residues).

The protein belongs to the universal ribosomal protein uL15 family. Part of the 50S ribosomal subunit.

Functionally, binds to the 23S rRNA. The polypeptide is Large ribosomal subunit protein uL15 (Rhodopseudomonas palustris (strain BisA53)).